A 447-amino-acid polypeptide reads, in one-letter code: Exodeoxyribonuclease 7 large subunit (447 aa).

The protein belongs to the XseA family. As to quaternary structure, heterooligomer composed of large and small subunits.

It localises to the cytoplasm. It catalyses the reaction Exonucleolytic cleavage in either 5'- to 3'- or 3'- to 5'-direction to yield nucleoside 5'-phosphates.. Its function is as follows. Bidirectionally degrades single-stranded DNA into large acid-insoluble oligonucleotides, which are then degraded further into small acid-soluble oligonucleotides. The chain is Exodeoxyribonuclease 7 large subunit from Exiguobacterium sibiricum (strain DSM 17290 / CCUG 55495 / CIP 109462 / JCM 13490 / 255-15).